The primary structure comprises 343 residues: Methionine import ATP-binding protein MetN (343 aa).

One can recognise an ABC transporter domain in the interval 2 to 241 (IKLSNITKVF…PKTPLAQKFI (240 aa)). 38–45 (GASGAGKS) is an ATP binding site.

Belongs to the ABC transporter superfamily. Methionine importer (TC 3.A.1.24) family. As to quaternary structure, the complex is composed of two ATP-binding proteins (MetN), two transmembrane proteins (MetI) and a solute-binding protein (MetQ).

It is found in the cell inner membrane. The enzyme catalyses L-methionine(out) + ATP + H2O = L-methionine(in) + ADP + phosphate + H(+). It catalyses the reaction D-methionine(out) + ATP + H2O = D-methionine(in) + ADP + phosphate + H(+). In terms of biological role, part of the ABC transporter complex MetNIQ involved in methionine import. Responsible for energy coupling to the transport system. This chain is Methionine import ATP-binding protein MetN, found in Escherichia coli O6:K15:H31 (strain 536 / UPEC).